Here is a 234-residue protein sequence, read N- to C-terminus: N-acetyl-alpha-D-glucosaminyl L-malate deacetylase 1 (234 aa).

3 residues coordinate Zn(2+): His-12, Asp-15, and His-113.

This sequence belongs to the PIGL family. The cofactor is Zn(2+).

It carries out the reaction (S)-malyl N-acetyl-alpha-D-glucosaminide + H2O = (S)-malyl alpha-D-glucosaminide + acetate. With respect to regulation, inhibited by BSH. Functionally, involved in bacillithiol (BSH) biosynthesis. Catalyzes the second step of the pathway, the deacetylation of N-acetylglucosaminylmalate (GlcNAc-Mal) to glucosamine malate (GlcN-Mal). The sequence is that of N-acetyl-alpha-D-glucosaminyl L-malate deacetylase 1 from Bacillus anthracis.